A 217-amino-acid polypeptide reads, in one-letter code: Zinc finger CCHC-type and RNA-binding motif-containing protein 1 (217 aa).

In terms of domain architecture, RRM spans 10 to 88 (STVYVSNLPF…RVIKASIAID (79 aa)). Residues 105 to 122 (SKCYECGESGHLSYACPK) form a CCHC-type zinc finger. Residues 120–217 (CPKNMLGERE…YFSDEEELSD (98 aa)) form a disordered region. Positions 145-163 (PEEEIEEVEESEDEGEDPA) are enriched in acidic residues. A phosphoserine mark is found at Ser-155, Ser-210, and Ser-216.

Component of the U11/U12 snRNPs that are part of the U12-type spliceosome.

It is found in the nucleus. The protein localises to the nucleoplasm. This is Zinc finger CCHC-type and RNA-binding motif-containing protein 1 (ZCRB1) from Homo sapiens (Human).